The primary structure comprises 489 residues: Glutamyl-tRNA(Gln) amidotransferase subunit A (489 aa).

Residues Lys77 and Ser152 each act as charge relay system in the active site. The active-site Acyl-ester intermediate is the Ser176.

It belongs to the amidase family. GatA subfamily. Heterotrimer of A, B and C subunits.

The catalysed reaction is L-glutamyl-tRNA(Gln) + L-glutamine + ATP + H2O = L-glutaminyl-tRNA(Gln) + L-glutamate + ADP + phosphate + H(+). Allows the formation of correctly charged Gln-tRNA(Gln) through the transamidation of misacylated Glu-tRNA(Gln) in organisms which lack glutaminyl-tRNA synthetase. The reaction takes place in the presence of glutamine and ATP through an activated gamma-phospho-Glu-tRNA(Gln). The sequence is that of Glutamyl-tRNA(Gln) amidotransferase subunit A from Levilactobacillus brevis (strain ATCC 367 / BCRC 12310 / CIP 105137 / JCM 1170 / LMG 11437 / NCIMB 947 / NCTC 947) (Lactobacillus brevis).